A 746-amino-acid polypeptide reads, in one-letter code: MEICYVQEVASSLVREFLSRKGLKKTSLTLEEELPRAPRSISTRNELRAALHLDRLYKENKLTEKPLKTLLEIMTKYFLEHSGKTKALNMRGEQNPAPPKGLATNLQQRHAGDLMMAVCDVSDDETGESSAVSDTSKTEIYRSQNDLQFNKSNHLKGPDRKQKQTEAGVTSTGVCSEGELMPPRVNIREHQERESWEMALGAKSSRSETQRPRSSRMVRGMMSGPTASSQEDSLKKRGPRRSAAANTPNPIKGEVLSEITGGMGEPSTIAPANTALKLGKEFAAKLLSTSENLRNVSLCSTNAVPKPNAFAAAETAADGKGATEASPYASNEHRRRSGFSNMDLNSASLAKKTLPFHRERNDKEDLKLDDVEDCLVTEEIRNIPTALPGNLKQIEGKPIDLAQAVEIKKILFGSSFCCFSDEWKIQSFTFNNNQPLRYGFIQKKGGPCGVLAAVQGCVLKNLLFGKDADLRVLQPSDSQRTSCLCKAIADILWRAGDNKEAVVALSCGRPQFSPAGRYKADGILESLILYKIRKYEDLMGFVQQHISQFELGPFGCTLLTLSVVLSRSVELVQKDFDVSTNCLIGAHSYCTQELVNLILSGRAVSNVFNDVVELDSGNGNITLLRGVAHRTDIGFLSLFEHYNVCQVGSYLKTPRFPIWVICSESHFSVLFCVRRELMSDWKMERRFDLYYYDGLANQQDEIRLTVDTAATYIEEQENDLTPPLEHCIRTKWKGAVIDWNGTEPIL.

3 disordered regions span residues 123 to 179 (DDET…SEGE), 198 to 254 (MALG…IKGE), and 319 to 342 (GKGA…FSNM). 2 stretches are compositionally biased toward polar residues: residues 141–152 (YRSQNDLQFNKS) and 165–174 (TEAGVTSTGV). The active-site Nucleophile is the C448. The Proton acceptor role is filled by H666.

This sequence belongs to the MINDY deubiquitinase family. FAM188 subfamily.

It carries out the reaction Thiol-dependent hydrolysis of ester, thioester, amide, peptide and isopeptide bonds formed by the C-terminal Gly of ubiquitin (a 76-residue protein attached to proteins as an intracellular targeting signal).. In terms of biological role, probable hydrolase that can remove 'Lys-48'-linked conjugated ubiquitin from proteins. The sequence is that of Probable ubiquitin carboxyl-terminal hydrolase MINDY-4 (mindy4) from Xenopus tropicalis (Western clawed frog).